Here is a 171-residue protein sequence, read N- to C-terminus: UPF0312 protein MW2606 (171 aa).

It belongs to the UPF0312 family.

In Staphylococcus aureus (strain MW2), this protein is UPF0312 protein MW2606.